The chain runs to 177 residues: SPbeta prophage-derived uncharacterized protein YopI (177 aa).

A helical membrane pass occupies residues 11-31 (FEGIIGALLGVIVTLILTHIL).

The protein localises to the cell membrane. The protein is SPbeta prophage-derived uncharacterized protein YopI (yopI) of Bacillus subtilis (strain 168).